Here is a 355-residue protein sequence, read N- to C-terminus: Probable sugar phosphate/phosphate translocator At3g10290 (355 aa).

Residues 19-51 (QKKQPNLSISSTTKMNKKNPDQKSDMSSSSSSP) are disordered. Residues 22–32 (QPNLSISSTTK) show a composition bias toward polar residues. 10 helical membrane-spanning segments follow: residues 55–75 (TLFI…VLLL), 89–109 (IFLT…SIVF), 124–144 (FLKV…GNIS), 150–170 (VSFN…FAYI), 177–197 (AWVT…ASGG), 198–218 (EPGF…ARAF), 239–259 (LMLY…IFME), 277–297 (YILL…NFLV), 305–325 (TLQV…ILLF), and 328–348 (PVTV…VAYG).

It belongs to the TPT transporter family. TPT (TC 2.A.7.9) subfamily.

It localises to the membrane. In Arabidopsis thaliana (Mouse-ear cress), this protein is Probable sugar phosphate/phosphate translocator At3g10290.